Reading from the N-terminus, the 163-residue chain is Phosphopantetheine adenylyltransferase (163 aa).

Thr-11 contacts substrate. Residues 11 to 12 (TF) and His-19 each bind ATP. Substrate is bound by residues Lys-43, Leu-75, and Arg-89. Residues 90–92 (GLR), Glu-100, and 125–131 (YMFISAT) contribute to the ATP site.

It belongs to the bacterial CoaD family. In terms of assembly, homohexamer. Mg(2+) is required as a cofactor.

The protein localises to the cytoplasm. It carries out the reaction (R)-4'-phosphopantetheine + ATP + H(+) = 3'-dephospho-CoA + diphosphate. It functions in the pathway cofactor biosynthesis; coenzyme A biosynthesis; CoA from (R)-pantothenate: step 4/5. Reversibly transfers an adenylyl group from ATP to 4'-phosphopantetheine, yielding dephospho-CoA (dPCoA) and pyrophosphate. The protein is Phosphopantetheine adenylyltransferase of Azoarcus sp. (strain BH72).